Here is an 89-residue protein sequence, read N- to C-terminus: Small ribosomal subunit protein uS14A (89 aa).

It belongs to the universal ribosomal protein uS14 family. In terms of assembly, part of the 30S ribosomal subunit. Contacts proteins S3 and S10.

Binds 16S rRNA, required for the assembly of 30S particles and may also be responsible for determining the conformation of the 16S rRNA at the A site. In Staphylococcus epidermidis (strain ATCC 35984 / DSM 28319 / BCRC 17069 / CCUG 31568 / BM 3577 / RP62A), this protein is Small ribosomal subunit protein uS14A.